The sequence spans 267 residues: Small ribosomal subunit protein uS3 (267 aa).

The KH type-2 domain maps to 43–111 (IRKEMSKDLE…QVQLNIFEVK (69 aa)). Residues 216 to 267 (FEEQQAQQNNRPGRRGGDRRPRRGNRSAAPQAAEAPKAEAPAEAAPAAETKE) are disordered. A compositionally biased stretch (low complexity) spans 241–267 (RSAAPQAAEAPKAEAPAEAAPAAETKE).

It belongs to the universal ribosomal protein uS3 family. In terms of assembly, part of the 30S ribosomal subunit. Forms a tight complex with proteins S10 and S14.

Its function is as follows. Binds the lower part of the 30S subunit head. Binds mRNA in the 70S ribosome, positioning it for translation. The sequence is that of Small ribosomal subunit protein uS3 from Bifidobacterium longum (strain DJO10A).